The primary structure comprises 472 residues: Phosphoenolpyruvate carboxykinase (ATP), glycosomal (472 aa).

ATP is bound at residue 221–228 (GLSGTGKT).

Belongs to the phosphoenolpyruvate carboxykinase (ATP) family. As to quaternary structure, homodimer.

The protein localises to the glycosome. The enzyme catalyses oxaloacetate + ATP = phosphoenolpyruvate + ADP + CO2. Its pathway is carbohydrate biosynthesis; gluconeogenesis. The polypeptide is Phosphoenolpyruvate carboxykinase (ATP), glycosomal (PEPCK) (Trypanosoma cruzi).